The primary structure comprises 392 residues: p21-activated protein kinase-interacting protein 1 (392 aa).

WD repeat units follow at residues 40-77 (AHTA…DHGA), 80-118 (HHNG…CLKS), 121-160 (AHKG…SAFI), 202-240 (TNER…CLSE), and 243-284 (AHEN…KVSP). The tract at residues 309–392 (TKESPPAAAE…RKKKKIRMMQ (84 aa)) is disordered. Basic and acidic residues predominate over residues 325–351 (EQSRRNKEESGHAVQEEEKQPKPDTEK). Over residues 355-368 (TGDSNKPTRGNSLV) the composition is skewed to polar residues. The span at 381–392 (KKRKKKKIRMMQ) shows a compositional bias: basic residues.

Interacts with PAK1.

Its subcellular location is the nucleus. The protein localises to the nucleolus. In terms of biological role, negatively regulates the PAK1 kinase. PAK1 is a member of the PAK kinase family, which has been shown to play a positive role in the regulation of signaling pathways involving MAPK8 and RELA. PAK1 exists as an inactive homodimer, which is activated by binding of small GTPases such as CDC42 to an N-terminal regulatory domain. PAK1IP1 also binds to the N-terminus of PAK1, and inhibits the specific activation of PAK1 by CDC42. May be involved in ribosomal large subunit assembly. The chain is p21-activated protein kinase-interacting protein 1 (PAK1IP1) from Bos taurus (Bovine).